The sequence spans 146 residues: ATP synthase epsilon chain (146 aa).

A disordered region spans residues 102–122 (QSAKKRAEQHMQEAKEKHNER).

Belongs to the ATPase epsilon chain family. F-type ATPases have 2 components, CF(1) - the catalytic core - and CF(0) - the membrane proton channel. CF(1) has five subunits: alpha(3), beta(3), gamma(1), delta(1), epsilon(1). CF(0) has three main subunits: a, b and c.

It localises to the cell membrane. In terms of biological role, produces ATP from ADP in the presence of a proton gradient across the membrane. In Lactobacillus gasseri (strain ATCC 33323 / DSM 20243 / BCRC 14619 / CIP 102991 / JCM 1131 / KCTC 3163 / NCIMB 11718 / NCTC 13722 / AM63), this protein is ATP synthase epsilon chain.